A 213-amino-acid chain; its full sequence is ATP synthase peripheral stalk subunit OSCP, mitochondrial (213 aa).

The transit peptide at 1–23 directs the protein to the mitochondrion; that stretch reads MAAPAVSGLSRQVRCFSTSVVRP. Residues 5–23 carry the SIFI-degron motif; that stretch reads AVSGLSRQVRCFSTSVVRP. 4 positions are modified to N6-acetyllysine: Lys-54, Lys-60, Lys-70, and Lys-73. The residue at position 90 (Lys-90) is an N6-succinyllysine. N6-acetyllysine; alternate is present on residues Lys-158 and Lys-162. Residues Lys-158 and Lys-162 each carry the N6-succinyllysine; alternate modification. An N6-acetyllysine mark is found at Lys-172, Lys-176, and Lys-192. The residue at position 199 (Lys-199) is an N6-succinyllysine.

This sequence belongs to the ATPase delta chain family. Component of the ATP synthase complex composed at least of ATP5F1A/subunit alpha, ATP5F1B/subunit beta, ATP5MC1/subunit c (homooctomer), MT-ATP6/subunit a, MT-ATP8/subunit 8, ATP5ME/subunit e, ATP5MF/subunit f, ATP5MG/subunit g, ATP5MK/subunit k, ATP5MJ/subunit j, ATP5F1C/subunit gamma, ATP5F1D/subunit delta, ATP5F1E/subunit epsilon, ATP5PF/subunit F6, ATP5PB/subunit b, ATP5PD/subunit d, ATP5PO/subunit OSCP. ATP synthase complex consists of a soluble F(1) head domain (subunits alpha(3) and beta(3)) - the catalytic core - and a membrane F(0) domain - the membrane proton channel (subunits c, a, 8, e, f, g, k and j). These two domains are linked by a central stalk (subunits gamma, delta, and epsilon) rotating inside the F1 region and a stationary peripheral stalk (subunits F6, b, d, and OSCP). In terms of processing, acetylation at Lys-162 decreases ATP production. Deacetylated by SIRT3. In response to mitochondrial stress, the precursor protein is ubiquitinated by the SIFI complex in the cytoplasm before mitochondrial import, leading to its degradation. Within the SIFI complex, UBR4 initiates ubiquitin chain that are further elongated or branched by KCMF1.

Its subcellular location is the mitochondrion. The protein localises to the mitochondrion inner membrane. Subunit OSCP, of the mitochondrial membrane ATP synthase complex (F(1)F(0) ATP synthase or Complex V) that produces ATP from ADP in the presence of a proton gradient across the membrane which is generated by electron transport complexes of the respiratory chain. ATP synthase complex consist of a soluble F(1) head domain - the catalytic core - and a membrane F(1) domain - the membrane proton channel. These two domains are linked by a central stalk rotating inside the F(1) region and a stationary peripheral stalk. During catalysis, ATP synthesis in the catalytic domain of F(1) is coupled via a rotary mechanism of the central stalk subunits to proton translocation. In vivo, can only synthesize ATP although its ATP hydrolase activity can be activated artificially in vitro. Part of the complex F(0) domain. Part of the complex F(0) domain and the peripheric stalk, which acts as a stator to hold the catalytic alpha(3)beta(3) subcomplex and subunit a/ATP6 static relative to the rotary elements. This is ATP synthase peripheral stalk subunit OSCP, mitochondrial from Homo sapiens (Human).